The following is a 274-amino-acid chain: Large ribosomal subunit protein uL2 (274 aa).

The segment at 223 to 256 (VVMNPVDHPHGGGEGKTGEGRHPVDPWGNLTKGY) is disordered. Positions 229 to 246 (DHPHGGGEGKTGEGRHPV) are enriched in basic and acidic residues.

It belongs to the universal ribosomal protein uL2 family. In terms of assembly, part of the 50S ribosomal subunit. Forms a bridge to the 30S subunit in the 70S ribosome.

Functionally, one of the primary rRNA binding proteins. Required for association of the 30S and 50S subunits to form the 70S ribosome, for tRNA binding and peptide bond formation. It has been suggested to have peptidyltransferase activity; this is somewhat controversial. Makes several contacts with the 16S rRNA in the 70S ribosome. This Variovorax paradoxus (strain S110) protein is Large ribosomal subunit protein uL2.